Here is a 487-residue protein sequence, read N- to C-terminus: MARYLTVLGTQSHVGKSILVTALCRILKRRGYRVAPFKAQNMSNNSWITADGSEIGIAQAIQAFAAGAEPRAEMNPVLLKPKGNMTSQVVVLGKPLGDRVVGQYYESIESMMAIALNALYKLSEDYDVIVVEGAGGAAEINLYDRDIANIPLARAIHSPVLLVGDIERGGVFASLYGTIALLPPGDRELVKGLIINKFCGDPSLLGSGVGELEKLTGVPVMGIVPYSGLRIPSEDSVSLGDKKPEGLLDVDIAVVRFPLISNFTDFEALERIARVRYVSLDDSLGRPDIVILPGSKNTVSDLKMLKNSPLASEICSLASDGVPVIGICGGYQMLGRQVVDSGIEGGMPETIDGLGLLPVTTVFDRYEKCTCQSTKTVTGAGPLLAGIRGSAVTGYEIHMGQTRTDSPAFGDDGCVSDSGTILGTYLHGIFNNASFTDAVLKYACERKGLRYVRPEGVRDPYDELADIVESAIDLDAIIRLIESQDKV.

A GATase cobBQ-type domain is found at 249–435 (DVDIAVVRFP…LHGIFNNASF (187 aa)). Cysteine 328 serves as the catalytic Nucleophile. Histidine 427 is a catalytic residue.

Belongs to the CobB/CobQ family. CobQ subfamily.

The protein operates within cofactor biosynthesis; adenosylcobalamin biosynthesis. In terms of biological role, catalyzes amidations at positions B, D, E, and G on adenosylcobyrinic A,C-diamide. NH(2) groups are provided by glutamine, and one molecule of ATP is hydrogenolyzed for each amidation. In Methanocella arvoryzae (strain DSM 22066 / NBRC 105507 / MRE50), this protein is Probable cobyric acid synthase.